Here is a 227-residue protein sequence, read N- to C-terminus: Interleukin-6 (227 aa).

The first 22 residues, 1–22 (MASISYLLAPLVLAAVLQPTAG), serve as a signal peptide directing secretion. Residues 24–45 (PLDAPTESPAGETSGEEAETGS) are disordered. An intrachain disulfide couples cysteine 93 to cysteine 103.

This sequence belongs to the IL-6 superfamily. In terms of assembly, component of a hexamer of two molecules each of IL6, IL6R and IL6ST; first binds to IL6R to associate with the signaling subunit IL6ST. After induction, highly expressed in spleen. Can also be expressed in kidney after incubation with PHA.

The protein localises to the secreted. Cytokine with a wide variety of biological functions in immunity, tissue regeneration, and metabolism. Binds to IL6R, then the complex associates to the signaling subunit IL6ST/gp130 to trigger the intracellular IL6-signaling pathway. The interaction with the membrane-bound IL6R and IL6ST stimulates 'classic signaling', whereas the binding of IL6 and soluble IL6R to IL6ST stimulates 'trans-signaling'. Alternatively, 'cluster signaling' occurs when membrane-bound IL6:IL6R complexes on transmitter cells activate IL6ST receptors on neighboring receiver cells. The protein is Interleukin-6 (il6) of Takifugu rubripes (Japanese pufferfish).